We begin with the raw amino-acid sequence, 322 residues long: Acetyl-coenzyme A carboxylase carboxyl transferase subunit beta (322 aa).

Residues L24–D293 form the CoA carboxyltransferase N-terminal domain.

Belongs to the AccD/PCCB family. As to quaternary structure, acetyl-CoA carboxylase is a heterohexamer composed of biotin carboxyl carrier protein (AccB), biotin carboxylase (AccC) and two subunits each of ACCase subunit alpha (AccA) and ACCase subunit beta (AccD).

Its subcellular location is the cytoplasm. The catalysed reaction is N(6)-carboxybiotinyl-L-lysyl-[protein] + acetyl-CoA = N(6)-biotinyl-L-lysyl-[protein] + malonyl-CoA. It participates in lipid metabolism; malonyl-CoA biosynthesis; malonyl-CoA from acetyl-CoA: step 1/1. Its function is as follows. Component of the acetyl coenzyme A carboxylase (ACC) complex. Biotin carboxylase (BC) catalyzes the carboxylation of biotin on its carrier protein (BCCP) and then the CO(2) group is transferred by the transcarboxylase to acetyl-CoA to form malonyl-CoA. In Rhodopseudomonas palustris (strain BisB5), this protein is Acetyl-coenzyme A carboxylase carboxyl transferase subunit beta.